The following is a 1072-amino-acid chain: DNA-directed RNA polymerase subunit beta (1072 aa).

It belongs to the RNA polymerase beta chain family. In terms of assembly, in plastids the minimal PEP RNA polymerase catalytic core is composed of four subunits: alpha, beta, beta', and beta''. When a (nuclear-encoded) sigma factor is associated with the core the holoenzyme is formed, which can initiate transcription.

It is found in the plastid. It localises to the chloroplast. It catalyses the reaction RNA(n) + a ribonucleoside 5'-triphosphate = RNA(n+1) + diphosphate. In terms of biological role, DNA-dependent RNA polymerase catalyzes the transcription of DNA into RNA using the four ribonucleoside triphosphates as substrates. The protein is DNA-directed RNA polymerase subunit beta of Arabis hirsuta (Hairy rock-cress).